The chain runs to 556 residues: Bifunctional methyltransferase (556 aa).

Positions 1–310 (MQYSIQKFLN…NRVIEISLIQ (310 aa)) are RF MTase. S-adenosyl-L-methionine contacts are provided by residues 148 to 152 (GTGSG), D171, W200, and N215. Position 215–218 (215–218 (NPPY)) interacts with substrate. The segment at 313–556 (RSYARRIGKS…IITKIPPKSY (244 aa)) is tRNA MTase. Residues 348-399 (KNYNSCKIKSNYTKFNLEKSKESVSRGAERIKIREHLRTYKEDVANFSSSTS) are insert. The S-adenosyl-L-methionine site is built by E403, E428, N455, and D477. The active site involves D477. Positions 481 and 513 each coordinate substrate.

In the C-terminal section; belongs to the class I-like SAM-binding methyltransferase superfamily. TrmB family. The protein in the N-terminal section; belongs to the protein N5-glutamine methyltransferase family. PrmC subfamily.

It catalyses the reaction L-glutaminyl-[peptide chain release factor] + S-adenosyl-L-methionine = N(5)-methyl-L-glutaminyl-[peptide chain release factor] + S-adenosyl-L-homocysteine + H(+). The enzyme catalyses guanosine(46) in tRNA + S-adenosyl-L-methionine = N(7)-methylguanosine(46) in tRNA + S-adenosyl-L-homocysteine. In terms of biological role, methylates the class 1 translation termination release factors RF1/PrfA and RF2/PrfB on the glutamine residue of the universally conserved GGQ motif. Its function is as follows. Catalyzes the formation of N(7)-methylguanine at position 46 (m7G46) in tRNA. The sequence is that of Bifunctional methyltransferase (prmC/trmB) from Rickettsia bellii (strain RML369-C).